The sequence spans 131 residues: Small ribosomal subunit protein uS11 (131 aa).

The protein belongs to the universal ribosomal protein uS11 family. In terms of assembly, part of the 30S ribosomal subunit. Interacts with proteins S7 and S18. Binds to IF-3.

Its function is as follows. Located on the platform of the 30S subunit, it bridges several disparate RNA helices of the 16S rRNA. Forms part of the Shine-Dalgarno cleft in the 70S ribosome. This Geobacter metallireducens (strain ATCC 53774 / DSM 7210 / GS-15) protein is Small ribosomal subunit protein uS11.